The chain runs to 60 residues: Protein translocase subunit SecE (60 aa).

The chain crosses the membrane as a helical span at residues 31-51 (VIVVSTVIFFLVFFYALDLGI).

Belongs to the SecE/SEC61-gamma family. As to quaternary structure, component of the Sec protein translocase complex. Heterotrimer consisting of SecY, SecE and SecG subunits. The heterotrimers can form oligomers, although 1 heterotrimer is thought to be able to translocate proteins. Interacts with the ribosome. Interacts with SecDF, and other proteins may be involved. Interacts with SecA.

It localises to the cell membrane. Its function is as follows. Essential subunit of the Sec protein translocation channel SecYEG. Clamps together the 2 halves of SecY. May contact the channel plug during translocation. The chain is Protein translocase subunit SecE from Staphylococcus aureus (strain Mu50 / ATCC 700699).